The primary structure comprises 416 residues: MNLQEYVLNKAKKAKDTSRKFSSSSETDKIRILNYISEELMANKNYIISENQKDVESAKNTGMSSSLLDRLLLNQERITKMAEGVQKVAQLQSSVGNISQMWKRPNGLMIGKMVVPLGVIAIIYESRPNVTVDAAALCIKSGNCVVLRGGSEAIHSNNALVKIIHQAIERAGFSKDIVQFIEITDRKAVDELMKLYEYIDVLIPRGGPSLIKNTVENSMIPVIQTGAGNCHVYVDRQADLEKALKIVENAKISRPSVCNAAEKLLVHKDIAEEFLPKIYTLFEKKVELRGCEKTLKIIPQMKAAQEEDWSTEYLDYIMAVKIVDSTEEAINHINKYSTKHSEAIITENYTIAQKFLNEIDSAAVYVNASTRFTDGEEFGFGAEMGISTQKLHVRGPIGINELTTTKYIILGNGQVR.

The protein belongs to the gamma-glutamyl phosphate reductase family.

The protein resides in the cytoplasm. The catalysed reaction is L-glutamate 5-semialdehyde + phosphate + NADP(+) = L-glutamyl 5-phosphate + NADPH + H(+). It participates in amino-acid biosynthesis; L-proline biosynthesis; L-glutamate 5-semialdehyde from L-glutamate: step 2/2. In terms of biological role, catalyzes the NADPH-dependent reduction of L-glutamate 5-phosphate into L-glutamate 5-semialdehyde and phosphate. The product spontaneously undergoes cyclization to form 1-pyrroline-5-carboxylate. In Petrotoga mobilis (strain DSM 10674 / SJ95), this protein is Gamma-glutamyl phosphate reductase.